Here is a 219-residue protein sequence, read N- to C-terminus: Cytidylate kinase (219 aa).

Position 11–19 (11–19 (GPAGVGKTT)) interacts with ATP.

This sequence belongs to the cytidylate kinase family. Type 1 subfamily.

It is found in the cytoplasm. The catalysed reaction is CMP + ATP = CDP + ADP. It carries out the reaction dCMP + ATP = dCDP + ADP. This Oleidesulfovibrio alaskensis (strain ATCC BAA-1058 / DSM 17464 / G20) (Desulfovibrio alaskensis) protein is Cytidylate kinase.